Here is a 20-residue protein sequence, read N- to C-terminus: Cathepsin L-like cysteine proteinase (20 aa).

It belongs to the peptidase C1 family.

The protein resides in the lysosome. Its function is as follows. Thiol protease. The polypeptide is Cathepsin L-like cysteine proteinase (Fasciola hepatica (Liver fluke)).